Reading from the N-terminus, the 117-residue chain is Protein OPG035 (117 aa).

It belongs to the poxviridae OPG035 family.

Bcl-2-like protein which contributes to virulence by preventing host NF-kappa-B activation in response to pro-inflammatory stimuli such as TNF-alpha or IL1B. This chain is Protein OPG035 (OPG035), found in Bos taurus (Bovine).